Here is a 97-residue protein sequence, read N- to C-terminus: Late transcription unit B protein (97 aa).

This Chlamydia muridarum (strain MoPn / Nigg) protein is Late transcription unit B protein (ltuB).